The sequence spans 268 residues: Myeloid leukemia factor 1 (268 aa).

3 positions are modified to phosphoserine: Ser-6, Ser-8, and Ser-32. Positions 50-125 (RVHNRRGHND…IGDEPPKVFQ (76 aa)) are interaction with COPS3. The segment at 208-268 (PGRHNLENTR…KGSSVKSNKK (61 aa)) is disordered. 2 stretches are compositionally biased toward basic and acidic residues: residues 226-237 (PGSRELKRREKP) and 244-257 (EHGR…DKLH).

The protein belongs to the MLF family. Interacts with CENPU. Also interacts with NRBP1/MADM, YWHAZ/14-3-3-zeta and HNRPUL2/MANP. NRBP1 recruits a serine kinase which phosphorylates both itself and MLF1. Phosphorylated MLF1 then binds to YWHAZ and is retained in the cytoplasm. Retained in the nucleus by binding to HNRPUL2. Binds to COPS3/CSN3 which is required for suppression of COP1 and activation of p53. Post-translationally, phosphorylation is required for binding to YWHAZ.

It is found in the cytoplasm. Its subcellular location is the nucleus. The protein localises to the cell projection. The protein resides in the cilium. It localises to the cytoskeleton. It is found in the cilium basal body. Involved in lineage commitment of primary hemopoietic progenitors by restricting erythroid formation and enhancing myeloid formation. Interferes with erythropoietin-induced erythroid terminal differentiation by preventing cells from exiting the cell cycle through suppression of CDKN1B/p27Kip1 levels. Suppresses COP1 activity via CSN3 which activates p53 and induces cell cycle arrest. Binds DNA and affects the expression of a number of genes so may function as a transcription factor in the nucleus. The protein is Myeloid leukemia factor 1 (MLF1) of Pongo abelii (Sumatran orangutan).